The primary structure comprises 493 residues: Aspartyl/glutamyl-tRNA(Asn/Gln) amidotransferase subunit B (493 aa).

The tract at residues 473–493 (KSGGKANPKQAADLVNKRLTE) is disordered.

The protein belongs to the GatB/GatE family. GatB subfamily. Heterotrimer of A, B and C subunits.

The catalysed reaction is L-glutamyl-tRNA(Gln) + L-glutamine + ATP + H2O = L-glutaminyl-tRNA(Gln) + L-glutamate + ADP + phosphate + H(+). It carries out the reaction L-aspartyl-tRNA(Asn) + L-glutamine + ATP + H2O = L-asparaginyl-tRNA(Asn) + L-glutamate + ADP + phosphate + 2 H(+). Allows the formation of correctly charged Asn-tRNA(Asn) or Gln-tRNA(Gln) through the transamidation of misacylated Asp-tRNA(Asn) or Glu-tRNA(Gln) in organisms which lack either or both of asparaginyl-tRNA or glutaminyl-tRNA synthetases. The reaction takes place in the presence of glutamine and ATP through an activated phospho-Asp-tRNA(Asn) or phospho-Glu-tRNA(Gln). The chain is Aspartyl/glutamyl-tRNA(Asn/Gln) amidotransferase subunit B from Treponema denticola (strain ATCC 35405 / DSM 14222 / CIP 103919 / JCM 8153 / KCTC 15104).